The primary structure comprises 513 residues: Matrix metalloproteinase-27 (513 aa).

An N-terminal signal peptide occupies residues 1–17 (MKRLLLLFLFFITFSSA). The propeptide at 18–98 (FPLVRMTENE…PRCGVPDVGQ (81 aa)) is activation peptide. N-linked (GlcNAc...) asparagine glycosylation is present at asparagine 55. The Cysteine switch motif lies at 89 to 96 (PRCGVPDV). Zn(2+) is bound at residue cysteine 91. A glycan (N-linked (GlcNAc...) asparagine) is linked at asparagine 110. Residues aspartate 121 and aspartate 155 each coordinate Ca(2+). Histidine 165 contacts Zn(2+). Ca(2+)-binding residues include aspartate 173, glycine 174, and valine 178. Histidine 181 contributes to the Zn(2+) binding site. Positions 188 and 192 each coordinate Ca(2+). Zn(2+) is bound at residue histidine 194. Positions 196 and 199 each coordinate Ca(2+). Residue histidine 216 coordinates Zn(2+). Glutamate 217 is a catalytic residue. Zn(2+) is bound by residues histidine 220 and histidine 226. Hemopexin repeat units follow at residues 276–325 (PHAC…WPSL), 326–371 (PADL…GFPG), 373–421 (VKKI…FPGI), and 422–465 (SIRV…WFQC). An intrachain disulfide couples cysteine 279 to cysteine 465. Aspartate 286 is a binding site for Ca(2+). Residues aspartate 377 and aspartate 426 each coordinate Ca(2+). Residue asparagine 452 is glycosylated (N-linked (GlcNAc...) asparagine). Positions 466-513 (KEPKNSSFGFDINKEKAHSGGIKILYHKSLSLFIFGIVHLLKNTSIYQ) are required for retention in the endoplasmic reticulum.

Belongs to the peptidase M10A family. Ca(2+) is required as a cofactor. It depends on Zn(2+) as a cofactor. Post-translationally, N-glycosylated. In terms of tissue distribution, expressed in B-cells. Expressed in a subset of endometrial macrophages related to menstruation and in ovarian and peritoneal endometriotic lesions (at protein level).

The protein resides in the endoplasmic reticulum. Functionally, matrix metalloproteinases degrade protein components of the extracellular matrix such as fibronectin, laminin, gelatins and/or collagens. In Homo sapiens (Human), this protein is Matrix metalloproteinase-27 (MMP27).